The primary structure comprises 321 residues: Olfactory receptor 14J1 (321 aa).

The Extracellular segment spans residues 1-23; sequence MVNLTSMSGFLLMGFSDERKLQI. Asn-3 is a glycosylation site (N-linked (GlcNAc...) asparagine). Residues 24 to 44 traverse the membrane as a helical segment; that stretch reads LHALVFLVTYLLALTGNLLII. Residues 45-52 are Cytoplasmic-facing; the sequence is TIITVDRR. Residues 53–73 form a helical membrane-spanning segment; it reads LHSPMYYFLKHLSLLDLCFIS. Residues 74–97 lie on the Extracellular side of the membrane; that stretch reads VTVPQSIANSLMGNGYISLVQCIL. A disulfide bond links Cys-95 and Cys-187. Residues 98–118 traverse the membrane as a helical segment; sequence QVFFFIALASSEVAILTVMSY. Topologically, residues 119 to 137 are cytoplasmic; it reads DRYAAICQPLHYETIMDPR. A helical transmembrane segment spans residues 138-158; the sequence is ACRHAVIAVWIAGGLSGLMHA. The Extracellular segment spans residues 159–194; sequence AINFSIPLCGKRVIHQFFCDVPQMLKLACSYEFINE. Residues 195-215 traverse the membrane as a helical segment; it reads IALAAFTTSAAFICLISIVLS. Residues 216–235 lie on the Cytoplasmic side of the membrane; it reads YIRIFSTVLRIPSAEGRTKV. The helical transmembrane segment at 236-256 threads the bilayer; the sequence is FSTCLPHLFVATFFLSAAGFE. Residues 257 to 269 are Extracellular-facing; it reads FLRLPSDSSSTVD. The chain crosses the membrane as a helical span at residues 270–290; that stretch reads LVFSVFYTVIPPTLNPVIYSL. Over 291 to 321 the chain is Cytoplasmic; that stretch reads RNDSMKAALRKMLSKEELPQRKMCLKAMFKL.

This sequence belongs to the G-protein coupled receptor 1 family.

It localises to the cell membrane. In terms of biological role, odorant receptor. The polypeptide is Olfactory receptor 14J1 (OR14J1) (Homo sapiens (Human)).